Consider the following 335-residue polypeptide: Ribosomal RNA large subunit methyltransferase F (335 aa).

Belongs to the methyltransferase superfamily. METTL16/RlmF family.

The protein localises to the cytoplasm. The enzyme catalyses adenosine(1618) in 23S rRNA + S-adenosyl-L-methionine = N(6)-methyladenosine(1618) in 23S rRNA + S-adenosyl-L-homocysteine + H(+). In terms of biological role, specifically methylates the adenine in position 1618 of 23S rRNA. In Yersinia enterocolitica serotype O:8 / biotype 1B (strain NCTC 13174 / 8081), this protein is Ribosomal RNA large subunit methyltransferase F.